Consider the following 338-residue polypeptide: Anthranilate phosphoribosyltransferase (338 aa).

5-phospho-alpha-D-ribose 1-diphosphate contacts are provided by residues G81, 84 to 85 (GD), S89, 91 to 94 (NVST), 109 to 117 (KHGNRALSS), and A121. G81 is a binding site for anthranilate. S93 contacts Mg(2+). N112 contacts anthranilate. Anthranilate is bound at residue R167. Mg(2+) contacts are provided by D226 and E227.

The protein belongs to the anthranilate phosphoribosyltransferase family. As to quaternary structure, homodimer. It depends on Mg(2+) as a cofactor.

The catalysed reaction is N-(5-phospho-beta-D-ribosyl)anthranilate + diphosphate = 5-phospho-alpha-D-ribose 1-diphosphate + anthranilate. Its pathway is amino-acid biosynthesis; L-tryptophan biosynthesis; L-tryptophan from chorismate: step 2/5. Functionally, catalyzes the transfer of the phosphoribosyl group of 5-phosphorylribose-1-pyrophosphate (PRPP) to anthranilate to yield N-(5'-phosphoribosyl)-anthranilate (PRA). In Rhodopseudomonas palustris (strain BisB5), this protein is Anthranilate phosphoribosyltransferase.